We begin with the raw amino-acid sequence, 136 residues long: MVRPYPLIYFLFLPLGACFPLLDRREPTDAMGGLGAGERWADLAMGPRPHSVWGSSRWLRASQPQALLVIARGLQTSGREHAGCRFRFGRQDEGSEATGFLPAAGEKTSGPLGNLAEELNGYSRKKGGFSFRFGRR.

Positions 1–18 are cleaved as a signal peptide; sequence MVRPYPLIYFLFLPLGAC. Positions 19 to 90 are excised as a propeptide; it reads FPLLDRREPT…HAGCRFRFGR (72 aa). Gln91 bears the Pyrrolidone carboxylic acid mark. Phenylalanine amide is present on Phe133.

The protein belongs to the RFamide neuropeptide family. In terms of assembly, ligand for the G-protein coupled receptor QRFPR/GPR103. In terms of tissue distribution, expressed widely in the brain with highest expression levels in the cerebellum, medulla, pituitary, retina, vestibular nucleus, and white matter. Also expressed in the bladder, colon, coronary artery, parathyroid gland, prostate, testis, and thyroid.

The protein localises to the secreted. Its function is as follows. Stimulates feeding behavior, metabolic rate and locomotor activity and increases blood pressure. May have orexigenic activity. May promote aldosterone secretion by the adrenal gland. The polypeptide is Orexigenic neuropeptide QRFP (Homo sapiens (Human)).